The primary structure comprises 335 residues: Aliphatic sulfonates import ATP-binding protein SsuB (335 aa).

A disordered region spans residues 29–61 (DGDAQDAAVYERDGGAHAPPFASGGAPPDGDRA). The region spanning 74-293 (VRLTRVSKRY…ARASAAFAAL (220 aa)) is the ABC transporter domain. Residue 106–113 (GRSGCGKS) participates in ATP binding. Positions 308–335 (APAAPNAAGPEGASRGRAAPASGLRWAV) are disordered.

The protein belongs to the ABC transporter superfamily. Aliphatic sulfonates importer (TC 3.A.1.17.2) family. In terms of assembly, the complex is composed of two ATP-binding proteins (SsuB), two transmembrane proteins (SsuC) and a solute-binding protein (SsuA).

The protein localises to the cell inner membrane. The enzyme catalyses ATP + H2O + aliphatic sulfonate-[sulfonate-binding protein]Side 1 = ADP + phosphate + aliphatic sulfonateSide 2 + [sulfonate-binding protein]Side 1.. Its function is as follows. Part of the ABC transporter complex SsuABC involved in aliphatic sulfonates import. Responsible for energy coupling to the transport system. In Burkholderia pseudomallei (strain 1710b), this protein is Aliphatic sulfonates import ATP-binding protein SsuB.